A 737-amino-acid chain; its full sequence is Amyloid-beta A4 protein (737 aa).

Residues 1–18 (MGETTAFVLLLVATLTRS) form the signal peptide. Over 19–668 (SEIPADDTVG…ADDVGSNKGA (650 aa)) the chain is Extracellular. Residues 29–124 (LLTEPQVAMF…PYRCLVGEFV (96 aa)) form a GFLD subdomain region. In terms of domain architecture, E1 spans 29–190 (LLTEPQVAMF…RGVKFVCCPA (162 aa)). Cystine bridges form between Cys-39–Cys-63, Cys-74–Cys-118, Cys-99–Cys-106, Cys-134–Cys-188, Cys-145–Cys-175, and Cys-159–Cys-187. Residues 132-190 (DKCKFLHQERMNQCESHLHWHTVAKESCGDRSMNLHDYGMLLPCGIDRFRGVKFVCCPA) form a cuBD subdomain region. Cu cation contacts are provided by His-148, His-152, and Tyr-169. Composition is skewed to acidic residues over residues 193–207 (EQETDSSEVEGEESD) and 242–262 (GDGDEDEEDDEDVDPTDEQES). The segment at 193–280 (EQETDSSEVE…MTTTTTTTTE (88 aa)) is disordered. One can recognise a BPTI/Kunitz inhibitor domain in the interval 286–344 (VRAVCWAQAESGPCRAMLERWYFNPKKRRCVPFLFGGCGGNRNNFESEEYCLAVCSSSL). Cystine bridges form between Cys-290–Cys-340, Cys-299–Cys-323, and Cys-315–Cys-336. Residues 354 to 545 (AVDQYFEAPG…SEIQNQIYPA (192 aa)) enclose the E2 domain. N-linked (GlcNAc...) asparagine glycosylation is present at Asn-522. A helical membrane pass occupies residues 669–689 (IIGLMVGGVVIATVIVITLVM). The Cytoplasmic segment spans residues 690 to 737 (LRKKQYTSIHHGVIEVDAAVTPEERHLARMQQNGYENPTYKFFEQMQN). Positions 724-729 (YENPTY) match the YENPXY motif motif. The clathrin-binding stretch occupies residues 726 to 729 (NPTY).

This sequence belongs to the APP family.

The protein resides in the membrane. Functional neuronal receptor which couples to intracellular signaling pathway through the GTP-binding protein G(O). This chain is Amyloid-beta A4 protein (app), found in Takifugu rubripes (Japanese pufferfish).